Reading from the N-terminus, the 376-residue chain is MYG1 exonuclease (376 aa).

Residues 1–47 (MGHRFLRGLLTLLLPPPPLYTRHRMLGPESVPPPKRSRSKLMAPPRI) constitute a mitochondrion transit peptide. The residue at position 120 (Ser120) is a Phosphoserine. 2 positions are modified to N6-acetyllysine: Lys267 and Lys273.

Belongs to the MYG1 family. In terms of tissue distribution, ubiquitously expressed, with highest levels in testis.

The protein resides in the nucleus. It localises to the nucleoplasm. The protein localises to the mitochondrion matrix. It is found in the nucleolus. 3'-5' RNA exonuclease which cleaves in situ on specific transcripts in both nucleus and mitochondrion. Involved in regulating spatially segregated organellar RNA processing, acts as a coordinator of nucleo-mitochondrial crosstalk. In nucleolus, processes pre-ribosomal RNA involved in ribosome assembly and alters cytoplasmic translation. In mitochondrial matrix, processes 3'-termini of the mito-ribosomal and messenger RNAs and controls translation of mitochondrial proteins. The chain is MYG1 exonuclease from Homo sapiens (Human).